The sequence spans 509 residues: Maturase K (509 aa).

Belongs to the intron maturase 2 family. MatK subfamily.

It localises to the plastid. Its subcellular location is the chloroplast. Usually encoded in the trnK tRNA gene intron. Probably assists in splicing its own and other chloroplast group II introns. This chain is Maturase K, found in Thujopsis dolabrata (Hiba arborvitae).